The primary structure comprises 265 residues: Orotidine 5'-phosphate decarboxylase (265 aa).

Substrate-binding positions include Asp-38, 60 to 62, 91 to 100, Tyr-213, and Arg-232; these read KTH and DRKFADIGNT. The active-site Proton donor is the Lys-93.

Belongs to the OMP decarboxylase family.

It catalyses the reaction orotidine 5'-phosphate + H(+) = UMP + CO2. It participates in pyrimidine metabolism; UMP biosynthesis via de novo pathway; UMP from orotate: step 2/2. This chain is Orotidine 5'-phosphate decarboxylase (pyrG), found in Mucor circinelloides f. lusitanicus (Mucor racemosus var. lusitanicus).